The primary structure comprises 105 residues: Extracellular guanyl-specific ribonuclease Fl1 (105 aa).

2 disulfide bridges follow: C5-C101 and C23-C82. H39 is an active-site residue. E57 (proton acceptor) is an active-site residue. Catalysis depends on H90, which acts as the Proton donor.

It belongs to the ribonuclease N1/T1 family.

It carries out the reaction [RNA] containing guanosine + H2O = an [RNA fragment]-3'-guanosine-3'-phosphate + a 5'-hydroxy-ribonucleotide-3'-[RNA fragment].. In Gibberella baccata (Fusarium lateritium), this protein is Extracellular guanyl-specific ribonuclease Fl1.